Reading from the N-terminus, the 500-residue chain is Glucokinase-1 (500 aa).

N-acetylserine is present on serine 2. Residue serine 2 is modified to Phosphoserine. Residues 12–498 (RAVIQAVDQI…SGVGAALCAL (487 aa)) enclose the Hexokinase domain. Residues 74–216 (NGTERGVLLA…MPMIKVVALT (143 aa)) are hexokinase small subdomain. Lysine 110 serves as a coordination point for ATP. Residues 158–184 (KLGFTFSYPVDQTSLNSGTLIRWTKGF) form a glucose-binding region. The interval 217–487 (NDTVGTYLSH…RKVHLKIAKD (271 aa)) is hexokinase large subdomain. A Phosphoserine modification is found at serine 470. ATP is bound at residue 487 to 492 (DGSGVG).

This sequence belongs to the hexokinase family. In terms of assembly, monomer.

It catalyses the reaction D-glucose + ATP = D-glucose 6-phosphate + ADP + H(+). Its pathway is carbohydrate metabolism; hexose metabolism. The protein operates within carbohydrate degradation; glycolysis; D-glyceraldehyde 3-phosphate and glycerone phosphate from D-glucose: step 1/4. In terms of biological role, two isoenzymes, hexokinase-1 and hexokinase-2, can phosphorylate keto- and aldohexoses in yeast, whereas a third isoenzyme, GLK, is specific for aldohexoses. All glucose phosphorylating enzymes are involved in glucose uptake. The sequence is that of Glucokinase-1 (GLK1) from Saccharomyces cerevisiae (strain ATCC 204508 / S288c) (Baker's yeast).